Reading from the N-terminus, the 235-residue chain is Ribonuclease 3 (235 aa).

Positions 6–135 (LISLEKILGF…VIGAVYFDCG (130 aa)) constitute an RNase III domain. E48 contributes to the Mg(2+) binding site. The active site involves D52. Mg(2+) is bound by residues N121 and E124. E124 is a catalytic residue. A DRBM domain is found at 162 to 231 (DEKTTLQELL…AKKALELLKN (70 aa)).

This sequence belongs to the ribonuclease III family. In terms of assembly, homodimer. Requires Mg(2+) as cofactor.

The protein resides in the cytoplasm. It carries out the reaction Endonucleolytic cleavage to 5'-phosphomonoester.. Functionally, digests double-stranded RNA. Involved in the processing of primary rRNA transcript to yield the immediate precursors to the large and small rRNAs (23S and 16S). Processes some mRNAs, and tRNAs when they are encoded in the rRNA operon. Processes pre-crRNA and tracrRNA of type II CRISPR loci if present in the organism. This is Ribonuclease 3 from Carboxydothermus hydrogenoformans (strain ATCC BAA-161 / DSM 6008 / Z-2901).